A 247-amino-acid polypeptide reads, in one-letter code: Orotidine 5'-phosphate decarboxylase (247 aa).

Substrate-binding positions include Asp22, Lys44, 71–80, Thr131, Arg192, Gln201, Gly221, and Arg222; that span reads DLKFHDIPNT. Lys73 (proton donor) is an active-site residue.

The protein belongs to the OMP decarboxylase family. Type 1 subfamily. In terms of assembly, homodimer.

The enzyme catalyses orotidine 5'-phosphate + H(+) = UMP + CO2. It participates in pyrimidine metabolism; UMP biosynthesis via de novo pathway; UMP from orotate: step 2/2. Its function is as follows. Catalyzes the decarboxylation of orotidine 5'-monophosphate (OMP) to uridine 5'-monophosphate (UMP). The chain is Orotidine 5'-phosphate decarboxylase from Pectobacterium atrosepticum (strain SCRI 1043 / ATCC BAA-672) (Erwinia carotovora subsp. atroseptica).